A 217-amino-acid chain; its full sequence is LexA repressor (217 aa).

Residues 26–46 (FEEMKLALDLKSKSGIHRLIK) constitute a DNA-binding region (H-T-H motif). Residues Ser-138 and Lys-176 each act as for autocatalytic cleavage activity in the active site.

This sequence belongs to the peptidase S24 family. In terms of assembly, homodimer.

The enzyme catalyses Hydrolysis of Ala-|-Gly bond in repressor LexA.. In terms of biological role, represses a number of genes involved in the response to DNA damage (SOS response), including recA and lexA. In the presence of single-stranded DNA, RecA interacts with LexA causing an autocatalytic cleavage which disrupts the DNA-binding part of LexA, leading to derepression of the SOS regulon and eventually DNA repair. This chain is LexA repressor, found in Zymomonas mobilis subsp. mobilis (strain ATCC 31821 / ZM4 / CP4).